The sequence spans 194 residues: dCTP deaminase (194 aa).

DCTP is bound by residues 110-115 (RSSLAR), Asp-128, 136-138 (VLE), Tyr-171, Lys-178, and Gln-182. The Proton donor/acceptor role is filled by Glu-138. The tract at residues 175–194 (KDAKYKNQQSAVSSRINQDD) is disordered. Residues 180–194 (KNQQSAVSSRINQDD) show a composition bias toward polar residues.

It belongs to the dCTP deaminase family. Homotrimer.

The enzyme catalyses dCTP + H2O + H(+) = dUTP + NH4(+). It functions in the pathway pyrimidine metabolism; dUMP biosynthesis; dUMP from dCTP (dUTP route): step 1/2. In terms of biological role, catalyzes the deamination of dCTP to dUTP. The sequence is that of dCTP deaminase from Actinobacillus pleuropneumoniae serotype 5b (strain L20).